Consider the following 531-residue polypeptide: SWI/SNF-related matrix-associated actin-dependent regulator of chromatin subfamily D member 2 (531 aa).

An asymmetric dimethylarginine mark is found at Arg-81 and Arg-104. At Ser-203 the chain carries Phosphoserine. The disordered stretch occupies residues 205-226 (SKAEGDSAGTAGTPGGTPAGDK). Position 217 is a phosphothreonine (Thr-217). Lys-226 is covalently cross-linked (Glycyl lysine isopeptide (Lys-Gly) (interchain with G-Cter in SUMO2)). In terms of domain architecture, SWIB/MDM2 spans 306–383 (HQPPQYKLDP…PMKLAGLLQH (78 aa)).

Belongs to the SMARCD family. Component of the multiprotein chromatin-remodeling complexes SWI/SNF: SWI/SNF-A (BAF), SWI/SNF-B (PBAF) and related complexes. The canonical complex contains a catalytic subunit (either SMARCA4/BRG1/BAF190A or SMARCA2/BRM/BAF190B), and at least SMARCE1, ACTL6A/BAF53, SMARCC1/BAF155, SMARCC2/BAF170, and SMARCB1/SNF5/BAF47. Other subunits specific to each of the complexes may also be present permitting several possible combinations developmentally and tissue specific. Component of the BAF complex, which includes at least actin (ACTB), ARID1A/BAF250A, ARID1B/BAF250B, SMARCA2/BRM, SMARCA4/BRG1, ACTL6A/BAF53, ACTL6B/BAF53B, SMARCE1/BAF57, SMARCC1/BAF155, SMARCC2/BAF170, SMARCB1/SNF5/INI1, and one or more SMARCD1/BAF60A, SMARCD2/BAF60B, or SMARCD3/BAF60C. In muscle cells, the BAF complex also contains DPF3. Component of the SWI/SNF-B (PBAF) chromatin remodeling complex, at least composed of SMARCA4/BRG1, SMARCB1/BAF47/SNF5, ACTL6A/BAF53A or ACTL6B/BAF53B, SMARCE1/BAF57, SMARCD1/BAF60A, SMARCD2/BAF60B, perhaps SMARCD3/BAF60C, SMARCC1/BAF155, SMARCC2/BAF170, PBRM1/BAF180, ARID2/BAF200 and actin (ACTB). Interacts with UNKL. Interacts with CEBPE. Ubiquitinated through a signaling process involving RAC1 and the RING finger protein UNKL. As to expression, isoform 2 is expressed in the pancreas.

It is found in the nucleus. Functionally, involved in transcriptional activation and repression of select genes by chromatin remodeling (alteration of DNA-nucleosome topology). Component of SWI/SNF chromatin remodeling complexes that carry out key enzymatic activities, changing chromatin structure by altering DNA-histone contacts within a nucleosome in an ATP-dependent manner. Critical regulator of myeloid differentiation, controlling granulocytopoiesis and the expression of genes involved in neutrophil granule formation. The chain is SWI/SNF-related matrix-associated actin-dependent regulator of chromatin subfamily D member 2 (SMARCD2) from Homo sapiens (Human).